The chain runs to 427 residues: Peptidase B (427 aa).

The Mn(2+) site is built by K195 and D200. K207 is a catalytic residue. Positions 218, 277, and 279 each coordinate Mn(2+). R281 is a catalytic residue.

The protein belongs to the peptidase M17 family. In terms of assembly, homohexamer. Mn(2+) is required as a cofactor.

Its subcellular location is the cytoplasm. The enzyme catalyses Release of an N-terminal amino acid, Xaa, from a peptide or arylamide. Xaa is preferably Glu or Asp but may be other amino acids, including Leu, Met, His, Cys and Gln.. Functionally, probably plays an important role in intracellular peptide degradation. This Escherichia fergusonii (strain ATCC 35469 / DSM 13698 / CCUG 18766 / IAM 14443 / JCM 21226 / LMG 7866 / NBRC 102419 / NCTC 12128 / CDC 0568-73) protein is Peptidase B.